A 195-amino-acid polypeptide reads, in one-letter code: Probable nicotinate-nucleotide adenylyltransferase (195 aa).

This sequence belongs to the NadD family.

The enzyme catalyses nicotinate beta-D-ribonucleotide + ATP + H(+) = deamido-NAD(+) + diphosphate. Its pathway is cofactor biosynthesis; NAD(+) biosynthesis; deamido-NAD(+) from nicotinate D-ribonucleotide: step 1/1. Functionally, catalyzes the reversible adenylation of nicotinate mononucleotide (NaMN) to nicotinic acid adenine dinucleotide (NaAD). The sequence is that of Probable nicotinate-nucleotide adenylyltransferase from Bordetella petrii (strain ATCC BAA-461 / DSM 12804 / CCUG 43448).